The sequence spans 590 residues: Glutamine--tRNA ligase (590 aa).

Positions 55-65 (PEPNGYLHIGH) match the 'HIGH' region motif. Residues 56–58 (EPN) and 62–68 (HIGHAKS) each bind ATP. L-glutamine is bound by residues aspartate 93 and tyrosine 238. ATP is bound by residues threonine 257 and 292–293 (RL). The 'KMSKS' region signature appears at 299–303 (ITSKR).

It belongs to the class-I aminoacyl-tRNA synthetase family. In terms of assembly, monomer.

The protein resides in the cytoplasm. It catalyses the reaction tRNA(Gln) + L-glutamine + ATP = L-glutaminyl-tRNA(Gln) + AMP + diphosphate. This Polynucleobacter asymbioticus (strain DSM 18221 / CIP 109841 / QLW-P1DMWA-1) (Polynucleobacter necessarius subsp. asymbioticus) protein is Glutamine--tRNA ligase.